Here is a 55-residue protein sequence, read N- to C-terminus: Protein CADMIUM TOLERANCE 1 (55 aa).

A helical membrane pass occupies residues 24 to 40; that stretch reads GCLYACIFTALCCFCCY.

This sequence belongs to the CYSTM1 family.

It is found in the cell membrane. Its subcellular location is the secreted. The protein resides in the cell wall. Functionally, confers resistance to heavy metal ions (e.g. cadmium (CdCl(2)) and copper (CuCl(2))) by chelating them at the plasma membrane of root cells, thus stopping their entry and reducing their accumulation. Binds to aluminium (Al). The protein is Protein CADMIUM TOLERANCE 1 of Oryza sativa subsp. indica (Rice).